The following is a 364-amino-acid chain: Phosphoserine aminotransferase (364 aa).

R42 provides a ligand contact to L-glutamate. Pyridoxal 5'-phosphate-binding positions include 76–77 (GR), W102, T156, D175, and Q198. K199 carries the N6-(pyridoxal phosphate)lysine modification. Pyridoxal 5'-phosphate is bound at residue 240–241 (NT).

This sequence belongs to the class-V pyridoxal-phosphate-dependent aminotransferase family. SerC subfamily. As to quaternary structure, homodimer. Requires pyridoxal 5'-phosphate as cofactor.

The protein resides in the cytoplasm. It catalyses the reaction O-phospho-L-serine + 2-oxoglutarate = 3-phosphooxypyruvate + L-glutamate. The enzyme catalyses 4-(phosphooxy)-L-threonine + 2-oxoglutarate = (R)-3-hydroxy-2-oxo-4-phosphooxybutanoate + L-glutamate. It participates in amino-acid biosynthesis; L-serine biosynthesis; L-serine from 3-phospho-D-glycerate: step 2/3. The protein operates within cofactor biosynthesis; pyridoxine 5'-phosphate biosynthesis; pyridoxine 5'-phosphate from D-erythrose 4-phosphate: step 3/5. Its function is as follows. Catalyzes the reversible conversion of 3-phosphohydroxypyruvate to phosphoserine and of 3-hydroxy-2-oxo-4-phosphonooxybutanoate to phosphohydroxythreonine. The sequence is that of Phosphoserine aminotransferase from Shewanella sediminis (strain HAW-EB3).